Reading from the N-terminus, the 550-residue chain is Complement control protein (550 aa).

An N-terminal signal peptide occupies residues 1-19; that stretch reads MAFLRQTLWILWTFTMVIG. 4 consecutive Sushi domains span residues 23-83, 84-150, 151-209, and 210-268; these read EKCS…TCNK, KSCP…FCEK, EKCH…TCEL, and AGCK…KCVL. 8 cysteine pairs are disulfide-bonded: C25–C68, C53–C81, C86–C131, C116–C148, C153–C194, C180–C207, C212–C254, and C240–C266. Residues N63 and N111 are each glycosylated (N-linked (GlcNAc...) asparagine; by host). N197 carries an N-linked (GlcNAc...) asparagine; by host glycan. N-linked (GlcNAc...) asparagine; by host glycans are attached at residues N255, N275, and N299. The interval 269 to 338 is disordered; the sequence is EDIDDPNNSN…TSEGFNETTT (70 aa). 2 stretches are compositionally biased toward polar residues: residues 288 to 302 and 312 to 321; these read EKPNGNVFQRSNYTE and TAATCDTNCE. N334, N371, N374, and N378 each carry an N-linked (GlcNAc...) asparagine; by host glycan. Disordered stretches follow at residues 387-408 and 420-516; these read TPTSQDDATPSIPSVQTPNYNT and IEEG…RPPA. Positions 424 to 440 are enriched in polar residues; that stretch reads PSNSTTSEKATASTLSH. N-linked (GlcNAc...) asparagine; by host glycans are attached at residues N426, N445, N455, and N483. Polar residues predominate over residues 450-476; the sequence is IYTTLNKTTQLPSTNKPTNSQAKSSTK. A compositionally biased stretch (polar residues) spans 484 to 495; sequence KTTSNPAISLTD. A helical membrane pass occupies residues 528–548; it reads IGLLTAVALTCGLITLFHYLF.

The protein localises to the host membrane. It is found in the virion membrane. Inhibits the complement component of the host innate immune response. Regulates host C3 convertases, accelerating their decay, and acts as a cofactor for factor I degradation of C4b and C3b. Also binds heparin, and therefore may play two distinct roles when incorporated in virion membranes: immune evasion and host cell binding. This Human herpesvirus 8 type P (isolate GK18) (HHV-8) protein is Complement control protein (ORF4).